Here is a 267-residue protein sequence, read N- to C-terminus: NAD kinase (267 aa).

The Proton acceptor role is filled by Asp-45. NAD(+)-binding positions include Asp-45–Gly-46, Asn-122–Glu-123, Arg-148, Asp-150, Thr-161–Ser-166, Ala-185, and Gln-223.

The protein belongs to the NAD kinase family. A divalent metal cation is required as a cofactor.

Its subcellular location is the cytoplasm. The enzyme catalyses NAD(+) + ATP = ADP + NADP(+) + H(+). In terms of biological role, involved in the regulation of the intracellular balance of NAD and NADP, and is a key enzyme in the biosynthesis of NADP. Catalyzes specifically the phosphorylation on 2'-hydroxyl of the adenosine moiety of NAD to yield NADP. This is NAD kinase from Levilactobacillus brevis (strain ATCC 367 / BCRC 12310 / CIP 105137 / JCM 1170 / LMG 11437 / NCIMB 947 / NCTC 947) (Lactobacillus brevis).